Consider the following 145-residue polypeptide: Small ribosomal subunit protein eS19 (145 aa).

This sequence belongs to the eukaryotic ribosomal protein eS19 family. As to quaternary structure, part of the 30S ribosomal subunit.

May be involved in maturation of the 30S ribosomal subunit. The chain is Small ribosomal subunit protein eS19 from Methanothermobacter thermautotrophicus (strain ATCC 29096 / DSM 1053 / JCM 10044 / NBRC 100330 / Delta H) (Methanobacterium thermoautotrophicum).